Reading from the N-terminus, the 594-residue chain is UV-stimulated scaffold protein A homolog (594 aa).

A VHS-like region spans residues 24–170 (RKNLNRFIRE…VTLKKTKFVD (147 aa)). Positions 170–198 (DYENGAKKIEAERKRKKILEERKMKMIEN) form a coiled coil. A UVSSA-type zinc finger spans residues 466–493 (RKVCLAKMKSGKLCPRKDYYTCPLHGKI). Positions 469, 479, 487, and 490 each coordinate Zn(2+). A coiled-coil region spans residues 503–540 (INEEDRLEENYRKEQNHLKEADKIRQMIEKEYESKTKR). Residues 533 to 558 (EYESKTKRRKKHDVDTTASEDVRNRL) are disordered. Over residues 544–558 (HDVDTTASEDVRNRL) the composition is skewed to basic and acidic residues.

This sequence belongs to the UVSSA family.

The protein localises to the chromosome. Factor involved in transcription-coupled nucleotide excision repair (TC-NER) in response to UV damage. TC-NER allows RNA polymerase II-blocking lesions to be rapidly removed from the transcribed strand of active genes. In Caenorhabditis elegans, this protein is UV-stimulated scaffold protein A homolog.